A 176-amino-acid polypeptide reads, in one-letter code: Disulfide bond formation protein B (176 aa).

Residues 1–14 (MLRFLNRCSRGRGA) are Cytoplasmic-facing. A helical membrane pass occupies residues 15–31 (WLLLAFTALALELTALY). Topologically, residues 32-49 (FQHVMLLKPCVLCIYQRS) are periplasmic. Cysteine 41 and cysteine 44 are disulfide-bonded. The helical transmembrane segment at 50 to 65 (ALWGVFAAGIVGAIAP) threads the bilayer. The Cytoplasmic segment spans residues 66–71 (SSLLRY). The chain crosses the membrane as a helical span at residues 72–89 (PAIALWIYSSYEGIRLAW). Topologically, residues 90–144 (KHTDILLNPSPFTTCDFFVSFPSWLPLDKWLPAIFNATGDCSERQWSFLSMEMPQ) are periplasmic. An intrachain disulfide couples cysteine 104 to cysteine 130. Residues 145-163 (WLLGIFAAYLLIAVLVLIA) form a helical membrane-spanning segment. Residues 164–176 (QPFRSKRRDLFSR) are Cytoplasmic-facing.

The protein belongs to the DsbB family.

It localises to the cell inner membrane. Its function is as follows. Required for disulfide bond formation in some periplasmic proteins. Acts by oxidizing the DsbA protein. This chain is Disulfide bond formation protein B, found in Pectobacterium atrosepticum (strain SCRI 1043 / ATCC BAA-672) (Erwinia carotovora subsp. atroseptica).